A 155-amino-acid polypeptide reads, in one-letter code: NADPH-dependent 7-cyano-7-deazaguanine reductase (155 aa).

Cys-53 acts as the Thioimide intermediate in catalysis. The active-site Proton donor is Asp-60. Residues 75–77 (VES) and 94–95 (HE) each bind substrate.

The protein belongs to the GTP cyclohydrolase I family. QueF type 1 subfamily.

The protein localises to the cytoplasm. It catalyses the reaction 7-aminomethyl-7-carbaguanine + 2 NADP(+) = 7-cyano-7-deazaguanine + 2 NADPH + 3 H(+). It participates in tRNA modification; tRNA-queuosine biosynthesis. Catalyzes the NADPH-dependent reduction of 7-cyano-7-deazaguanine (preQ0) to 7-aminomethyl-7-deazaguanine (preQ1). This Hyphomonas neptunium (strain ATCC 15444) protein is NADPH-dependent 7-cyano-7-deazaguanine reductase.